Consider the following 39-residue polypeptide: U1-ectatotoxin-Et1b subunit A (39 aa).

Cys-14 and Cys-35 form a disulfide bridge.

It belongs to the ectatomin family. Ectatomin-Et subfamily. As to quaternary structure, heterodimer of subunits A and B; disulfide-linked. In terms of tissue distribution, expressed by the venom gland.

The protein resides in the secreted. It localises to the target cell membrane. This Ectatomma tuberculatum (Selva ant) protein is U1-ectatotoxin-Et1b subunit A.